A 79-amino-acid polypeptide reads, in one-letter code: Cytochrome b (79 aa).

Helical transmembrane passes span 1 to 7 (TALFLAM), 31 to 52 (WLIR…YLHI), and 67 to 79 (WNVG…LTMM). Heme b-binding residues include histidine 37 and histidine 51.

The protein belongs to the cytochrome b family. As to quaternary structure, the cytochrome bc1 complex contains 3 respiratory subunits (MT-CYB, CYC1 and UQCRFS1), 2 core proteins (UQCRC1 and UQCRC2) and probably 6 low-molecular weight proteins. Heme b is required as a cofactor.

The protein resides in the mitochondrion inner membrane. Functionally, component of the ubiquinol-cytochrome c reductase complex (complex III or cytochrome b-c1 complex) that is part of the mitochondrial respiratory chain. The b-c1 complex mediates electron transfer from ubiquinol to cytochrome c. Contributes to the generation of a proton gradient across the mitochondrial membrane that is then used for ATP synthesis. The sequence is that of Cytochrome b (mt-cyb) from Amphilophus citrinellus (Midas cichlid).